Reading from the N-terminus, the 247-residue chain is ATP synthase subunit a, chloroplastic (247 aa).

5 consecutive transmembrane segments (helical) span residues 38-58 (QVLI…ALAV), 95-115 (VPFI…GALL), 134-154 (INTT…AGLT), 199-219 (LVVV…VMFL), and 220-240 (GLFT…AYIG).

Belongs to the ATPase A chain family. In terms of assembly, F-type ATPases have 2 components, CF(1) - the catalytic core - and CF(0) - the membrane proton channel. CF(1) has five subunits: alpha(3), beta(3), gamma(1), delta(1), epsilon(1). CF(0) has four main subunits: a, b, b' and c.

Its subcellular location is the plastid. It localises to the chloroplast thylakoid membrane. Its function is as follows. Key component of the proton channel; it plays a direct role in the translocation of protons across the membrane. The protein is ATP synthase subunit a, chloroplastic of Helianthus annuus (Common sunflower).